The following is a 648-amino-acid chain: Transcription initiation factor TFIID subunit 5 (648 aa).

A compositionally biased stretch (low complexity) spans 1-13 (MDSENSSSHSISS). The tract at residues 1 to 21 (MDSENSSSHSISSPQMFQNTH) is disordered. The 33-residue stretch at 35–67 (MNNESLQMIIGYLRRNGLTETEELLTREAGPVL) folds into the LisH domain. 6 WD repeats span residues 317–358 (NAPI…KKLR), 392–431 (GHGGPVFSVNFSPDRRLLISSAGDRTVRLWSMETQRNAVI), 433–472 (RTPAVVWQAQFCSRGYYFATASADKTAAMWSTDRMHPLRI), 475–514 (DPYGDVGCIDYHPNCNYIAGGSDDRYVRVWDVCSGTRVRI), 517–556 (GHKASIIAVKFSPCGRYIVSLDAIGNLMIWDLAYQRLVAA), and 560–599 (EQAGTKGSITFSRDGGVFAVSHGNSSIQLYSLDTLIGTVL).

This sequence belongs to the WD repeat TAF5 family. In terms of assembly, component of the TFIID basal transcription factor complex, composed of TATA-box-binding protein tbp-1, and a number of TBP-associated factors (TAFs).

The protein localises to the nucleus. The TFIID basal transcription factor complex plays a major role in the initiation of RNA polymerase II (Pol II)-dependent transcription. TFIID recognizes and binds promoters via its subunit tbp-1, a TATA-box-binding protein, and promotes assembly of the pre-initiation complex (PIC). The TFIID complex consists of tbp-1 and TBP-associated factors (TAFs), including taf-5. Essential for early embryonic development, but not required for transcription of some genes; probably acts via activating transcription initiation by RNA Pol II, as part of the TFIID complex. The sequence is that of Transcription initiation factor TFIID subunit 5 from Caenorhabditis elegans.